The primary structure comprises 275 residues: Shikimate dehydrogenase (NADP(+)) (275 aa).

Shikimate contacts are provided by residues 15–17 and threonine 62; that span reads SKS. The Proton acceptor role is filled by lysine 66. Glutamate 78 provides a ligand contact to NADP(+). Shikimate is bound by residues asparagine 87 and aspartate 102. NADP(+) is bound by residues 127–131, 151–156, and methionine 215; these read GAGGA and NRTPQK. Position 217 (tyrosine 217) interacts with shikimate. Glycine 239 is a binding site for NADP(+).

The protein belongs to the shikimate dehydrogenase family. In terms of assembly, homodimer.

The enzyme catalyses shikimate + NADP(+) = 3-dehydroshikimate + NADPH + H(+). It functions in the pathway metabolic intermediate biosynthesis; chorismate biosynthesis; chorismate from D-erythrose 4-phosphate and phosphoenolpyruvate: step 4/7. Its function is as follows. Involved in the biosynthesis of the chorismate, which leads to the biosynthesis of aromatic amino acids. Catalyzes the reversible NADPH linked reduction of 3-dehydroshikimate (DHSA) to yield shikimate (SA). The protein is Shikimate dehydrogenase (NADP(+)) of Nitrosospira multiformis (strain ATCC 25196 / NCIMB 11849 / C 71).